Here is a 607-residue protein sequence, read N- to C-terminus: Aspartate--tRNA(Asp/Asn) ligase (607 aa).

E176 is a binding site for L-aspartate. The tract at residues 200 to 203 (QQFK) is aspartate. The L-aspartate site is built by R222 and H456. 222-224 (RDE) serves as a coordination point for ATP. An ATP-binding site is contributed by E496. Position 503 (R503) interacts with L-aspartate. 548 to 551 (GIDR) is a binding site for ATP.

Belongs to the class-II aminoacyl-tRNA synthetase family. Type 1 subfamily. In terms of assembly, homodimer.

It localises to the cytoplasm. It catalyses the reaction tRNA(Asx) + L-aspartate + ATP = L-aspartyl-tRNA(Asx) + AMP + diphosphate. Its function is as follows. Aspartyl-tRNA synthetase with relaxed tRNA specificity since it is able to aspartylate not only its cognate tRNA(Asp) but also tRNA(Asn). Reaction proceeds in two steps: L-aspartate is first activated by ATP to form Asp-AMP and then transferred to the acceptor end of tRNA(Asp/Asn). The protein is Aspartate--tRNA(Asp/Asn) ligase of Parvibaculum lavamentivorans (strain DS-1 / DSM 13023 / NCIMB 13966).